Reading from the N-terminus, the 252-residue chain is 5'-nucleotidase SurE (252 aa).

A divalent metal cation is bound by residues aspartate 8, aspartate 9, serine 39, and asparagine 96.

It belongs to the SurE nucleotidase family. It depends on a divalent metal cation as a cofactor.

Its subcellular location is the cytoplasm. The enzyme catalyses a ribonucleoside 5'-phosphate + H2O = a ribonucleoside + phosphate. In terms of biological role, nucleotidase that shows phosphatase activity on nucleoside 5'-monophosphates. This is 5'-nucleotidase SurE from Petrotoga mobilis (strain DSM 10674 / SJ95).